The sequence spans 67 residues: uncharacterized protein (67 aa).

The chain crosses the membrane as a helical span at residues 26-46 (CYLLFCFLECFLNLFKKCGVF).

This sequence belongs to the plectrovirus ORF11 family.

The protein localises to the host membrane. This is an uncharacterized protein from Spiroplasma virus SpV1-C74 (SpV1).